Here is a 207-residue protein sequence, read N- to C-terminus: Proteasome subunit beta 2 (207 aa).

Residues 1-13 (METNNKLKILKTG) constitute a propeptide, removed in mature form; by autocatalysis. Catalysis depends on T14, which acts as the Nucleophile.

The protein belongs to the peptidase T1B family. As to quaternary structure, the 20S proteasome core is composed of 14 alpha and 14 beta subunits that assemble into four stacked heptameric rings, resulting in a barrel-shaped structure. The two inner rings, each composed of seven catalytic beta subunits, are sandwiched by two outer rings, each composed of seven alpha subunits. The catalytic chamber with the active sites is on the inside of the barrel. Has a gated structure, the ends of the cylinder being occluded by the N-termini of the alpha-subunits. Is capped at one or both ends by the proteasome regulatory ATPase, PAN.

It localises to the cytoplasm. It catalyses the reaction Cleavage of peptide bonds with very broad specificity.. With respect to regulation, the formation of the proteasomal ATPase PAN-20S proteasome complex, via the docking of the C-termini of PAN into the intersubunit pockets in the alpha-rings, triggers opening of the gate for substrate entry. Interconversion between the open-gate and close-gate conformations leads to a dynamic regulation of the 20S proteasome proteolysis activity. In terms of biological role, component of the proteasome core, a large protease complex with broad specificity involved in protein degradation. This Sulfurisphaera tokodaii (strain DSM 16993 / JCM 10545 / NBRC 100140 / 7) (Sulfolobus tokodaii) protein is Proteasome subunit beta 2.